The chain runs to 170 residues: Acetyl-CoA decarbonylase/synthase complex subunit epsilon 1 (170 aa).

Belongs to the CdhB family. Heterotetramer of two alpha and two epsilon subunits. The ACDS complex is made up of alpha, epsilon, beta, gamma and delta subunits with a probable stoichiometry of (alpha(2)epsilon(2))(4)-beta(8)-(gamma(1)delta(1))(8).

It participates in one-carbon metabolism; methanogenesis from acetate. Functionally, part of a complex that catalyzes the reversible cleavage of acetyl-CoA, allowing growth on acetate as sole source of carbon and energy. The alpha-epsilon subcomponent functions as a carbon monoxide dehydrogenase. The precise role of the epsilon subunit is unclear; it may have a stabilizing role within the alpha(2)epsilon(2) component and/or be involved in electron transfer to FAD during a potential FAD-mediated CO oxidation. This Methanosarcina thermophila protein is Acetyl-CoA decarbonylase/synthase complex subunit epsilon 1 (cdhB1).